The following is a 431-amino-acid chain: Galactose-3-O-sulfotransferase 3 (431 aa).

The Cytoplasmic segment spans residues 1-19; it reads MPPILQRLQQSTKMMSHRK. Residues 20-40 form a helical; Signal-anchor for type II membrane protein membrane-spanning segment; it reads ILLLVLGCSTVSLLIHQGSQL. At 41–431 the chain is on the lumenal side; that stretch reads SWYPKLFPLS…RALPRIPQGT (391 aa). Residues asparagine 91, asparagine 110, asparagine 177, and asparagine 302 are each glycosylated (N-linked (GlcNAc...) asparagine). Positions 400-431 are disordered; sequence KRRGGVRSRPESVLDNPPPRPIRALPRIPQGT. Residues 421–431 are compositionally biased toward low complexity; that stretch reads IRALPRIPQGT.

It belongs to the galactose-3-O-sulfotransferase family. Mg(2+) serves as cofactor.

The protein resides in the golgi apparatus. It localises to the golgi stack membrane. It participates in protein modification; carbohydrate sulfation. In terms of biological role, transfers a sulfate to position 3 of non-reducing beta-galactosyl residues in N-glycans and core2-branched O-glycans. Has high activity towards Gal-beta-1,4-GlcNAc, Gal-beta-1,4(Fuc-alpha-1,3)GlcNAc and lower activity towards Gal-beta-1,3(Fuc-alpha-1,4)GlcNAc. The chain is Galactose-3-O-sulfotransferase 3 (Gal3st3) from Mus musculus (Mouse).